The primary structure comprises 389 residues: Chalcone synthase 1 (389 aa).

The active site involves cysteine 164.

The protein belongs to the thiolase-like superfamily. Chalcone/stilbene synthases family.

The catalysed reaction is (E)-4-coumaroyl-CoA + 3 malonyl-CoA + 3 H(+) = 2',4,4',6'-tetrahydroxychalcone + 3 CO2 + 4 CoA. It functions in the pathway secondary metabolite biosynthesis; flavonoid biosynthesis. The primary product of this enzyme is 4,2',4',6'-tetrahydroxychalcone (also termed naringenin-chalcone or chalcone) which can under specific conditions spontaneously isomerize into naringenin. This is Chalcone synthase 1 (CHS1) from Daucus carota (Wild carrot).